Here is a 155-residue protein sequence, read N- to C-terminus: 3-hydroxyacyl-[acyl-carrier-protein] dehydratase FabZ (155 aa).

Residue histidine 61 is part of the active site.

It belongs to the thioester dehydratase family. FabZ subfamily.

The protein localises to the cytoplasm. The enzyme catalyses a (3R)-hydroxyacyl-[ACP] = a (2E)-enoyl-[ACP] + H2O. In terms of biological role, involved in unsaturated fatty acids biosynthesis. Catalyzes the dehydration of short chain beta-hydroxyacyl-ACPs and long chain saturated and unsaturated beta-hydroxyacyl-ACPs. The chain is 3-hydroxyacyl-[acyl-carrier-protein] dehydratase FabZ from Synechococcus sp. (strain ATCC 27144 / PCC 6301 / SAUG 1402/1) (Anacystis nidulans).